A 347-amino-acid chain; its full sequence is Phosphoribosylformylglycinamidine cyclo-ligase (347 aa).

It belongs to the AIR synthase family.

The protein resides in the cytoplasm. The catalysed reaction is 2-formamido-N(1)-(5-O-phospho-beta-D-ribosyl)acetamidine + ATP = 5-amino-1-(5-phospho-beta-D-ribosyl)imidazole + ADP + phosphate + H(+). The protein operates within purine metabolism; IMP biosynthesis via de novo pathway; 5-amino-1-(5-phospho-D-ribosyl)imidazole from N(2)-formyl-N(1)-(5-phospho-D-ribosyl)glycinamide: step 2/2. The sequence is that of Phosphoribosylformylglycinamidine cyclo-ligase from Hydrogenovibrio crunogenus (strain DSM 25203 / XCL-2) (Thiomicrospira crunogena).